Reading from the N-terminus, the 405-residue chain is Probable succinyl-diaminopimelate desuccinylase (405 aa).

His-72 is a binding site for Zn(2+). The active site involves Asp-74. Asp-105 lines the Zn(2+) pocket. The Proton acceptor role is filled by Glu-139. Zn(2+)-binding residues include Glu-140, Glu-165, and His-377.

Belongs to the peptidase M20A family. It depends on Zn(2+) as a cofactor. Co(2+) serves as cofactor.

It carries out the reaction N-succinyl-(2S,6S)-2,6-diaminopimelate + H2O = (2S,6S)-2,6-diaminopimelate + succinate. Its pathway is amino-acid biosynthesis; L-lysine biosynthesis via DAP pathway; LL-2,6-diaminopimelate from (S)-tetrahydrodipicolinate (succinylase route): step 3/3. In Staphylococcus epidermidis (strain ATCC 35984 / DSM 28319 / BCRC 17069 / CCUG 31568 / BM 3577 / RP62A), this protein is Probable succinyl-diaminopimelate desuccinylase (dapE).